The following is a 43-amino-acid chain: Photosystem II reaction center protein Psb30 (43 aa).

Residues 15 to 35 (VIFQLTFVSLILISGPVVIFL) traverse the membrane as a helical segment.

This sequence belongs to the Psb30/Ycf12 family. As to quaternary structure, PSII is composed of 1 copy each of membrane proteins PsbA, PsbB, PsbC, PsbD, PsbE, PsbF, PsbH, PsbI, PsbJ, PsbK, PsbL, PsbM, PsbT, PsbX, PsbY, PsbZ, Psb30/Ycf12, peripheral proteins PsbO, CyanoQ (PsbQ), PsbU, PsbV and a large number of cofactors. It forms dimeric complexes.

The protein localises to the cellular thylakoid membrane. A core subunit of photosystem II (PSII), probably helps stabilize the reaction center. The sequence is that of Photosystem II reaction center protein Psb30 from Picosynechococcus sp. (strain ATCC 27264 / PCC 7002 / PR-6) (Agmenellum quadruplicatum).